We begin with the raw amino-acid sequence, 333 residues long: Beta-ketoacyl-[acyl-carrier-protein] synthase III (333 aa).

Active-site residues include Cys116 and His258. Residues 259–263 (QANKR) are ACP-binding. Residue Asn288 is part of the active site.

Belongs to the thiolase-like superfamily. FabH family. Homodimer.

Its subcellular location is the cytoplasm. The enzyme catalyses malonyl-[ACP] + acetyl-CoA + H(+) = 3-oxobutanoyl-[ACP] + CO2 + CoA. The protein operates within lipid metabolism; fatty acid biosynthesis. Functionally, catalyzes the condensation reaction of fatty acid synthesis by the addition to an acyl acceptor of two carbons from malonyl-ACP. Catalyzes the first condensation reaction which initiates fatty acid synthesis and may therefore play a role in governing the total rate of fatty acid production. Possesses both acetoacetyl-ACP synthase and acetyl transacylase activities. Its substrate specificity determines the biosynthesis of branched-chain and/or straight-chain of fatty acids. The sequence is that of Beta-ketoacyl-[acyl-carrier-protein] synthase III from Koribacter versatilis (strain Ellin345).